Here is a 205-residue protein sequence, read N- to C-terminus: Arginine exporter protein ArgO (205 aa).

Helical transmembrane passes span 1 to 21, 37 to 57, 68 to 88, 112 to 132, 147 to 167, and 182 to 202; these read MLAV…PLGP, LMVA…GIFG, LLAL…WGAF, VVTM…TFVV, WFAL…ALLA, and IINT…AWQG.

The protein belongs to the LysE/ArgO transporter (TC 2.A.75) family.

The protein resides in the cell inner membrane. The catalysed reaction is L-arginine(in) = L-arginine(out). In terms of biological role, involved in the export of arginine. Important to control the intracellular level of arginine and the correct balance between arginine and lysine. The chain is Arginine exporter protein ArgO from Serratia proteamaculans (strain 568).